The chain runs to 495 residues: Probable endopolygalacturonase D (495 aa).

The N-terminal stretch at 1–16 (MKRSALLASFLPLALG) is a signal peptide. An intrachain disulfide couples C154 to C169. PbH1 repeat units lie at residues 261 to 283 (MYNSKIENLNILNWPVHCFEIEN), 284 to 322 (TEYLTISGLILNNTAGDAANSKSDGDPAAHNTDGFDIKQ), and 323 to 344 (SDFLTLSNSWVHNQDDCVAVTS). Residue N295 is glycosylated (N-linked (GlcNAc...) asparagine). D337 functions as the Proton donor in the catalytic mechanism. Residues C339 and C355 are joined by a disulfide bond. H359 is a catalytic residue. An N-linked (GlcNAc...) asparagine glycan is attached at N371. PbH1 repeat units lie at residues 374–395 (VDGVTFSNSQVINSENGCRIKS) and 403–425 (VYNVKYENITLSGISDYGIDIQQ). 2 N-linked (GlcNAc...) asparagine glycosylation sites follow: N410 and N444. Cystine bridges form between C464–C469 and C487–C494. The stretch at 469-492 (CSNFVFTDVDITGGSDDSCNYPSS) is one PbH1 6 repeat.

The protein belongs to the glycosyl hydrolase 28 family.

Its subcellular location is the secreted. The catalysed reaction is (1,4-alpha-D-galacturonosyl)n+m + H2O = (1,4-alpha-D-galacturonosyl)n + (1,4-alpha-D-galacturonosyl)m.. Functionally, involved in maceration and soft-rotting of plant tissue. Hydrolyzes the 1,4-alpha glycosidic bonds of de-esterified pectate in the smooth region of the plant cell wall. The protein is Probable endopolygalacturonase D (pgaD) of Aspergillus niger (strain ATCC MYA-4892 / CBS 513.88 / FGSC A1513).